The chain runs to 251 residues: HTH-type transcriptional regulator UlaR (251 aa).

Residues 3–58 (EAQRHQILLEMLAQLGFVTVEKVVERLGISPATARRDINKLDESGKLKKVRNGAEA) enclose the HTH deoR-type domain. The H-T-H motif DNA-binding region spans 20-39 (VTVEKVVERLGISPATARRD).

Its subcellular location is the cytoplasm. Functionally, represses ulaG and the ulaABCDEF operon. This is HTH-type transcriptional regulator UlaR from Escherichia coli O139:H28 (strain E24377A / ETEC).